We begin with the raw amino-acid sequence, 126 residues long: Large ribosomal subunit protein bL12 (126 aa).

This sequence belongs to the bacterial ribosomal protein bL12 family. Homodimer. Part of the ribosomal stalk of the 50S ribosomal subunit. Forms a multimeric L10(L12)X complex, where L10 forms an elongated spine to which 2 to 4 L12 dimers bind in a sequential fashion. Binds GTP-bound translation factors.

Forms part of the ribosomal stalk which helps the ribosome interact with GTP-bound translation factors. Is thus essential for accurate translation. This is Large ribosomal subunit protein bL12 from Trichlorobacter lovleyi (strain ATCC BAA-1151 / DSM 17278 / SZ) (Geobacter lovleyi).